A 292-amino-acid polypeptide reads, in one-letter code: Elongation factor Ts (292 aa).

The involved in Mg(2+) ion dislocation from EF-Tu stretch occupies residues 79 to 82 (TDFV).

Belongs to the EF-Ts family.

The protein localises to the cytoplasm. Associates with the EF-Tu.GDP complex and induces the exchange of GDP to GTP. It remains bound to the aminoacyl-tRNA.EF-Tu.GTP complex up to the GTP hydrolysis stage on the ribosome. The chain is Elongation factor Ts (tsf) from Idiomarina loihiensis (strain ATCC BAA-735 / DSM 15497 / L2-TR).